Here is a 337-residue protein sequence, read N- to C-terminus: tRNA N6-adenosine threonylcarbamoyltransferase (337 aa).

Residues histidine 111 and histidine 115 each coordinate Fe cation. Substrate-binding positions include 134 to 138, aspartate 167, glycine 180, and asparagine 272; that span reads LVSGG. Residue aspartate 300 coordinates Fe cation.

It belongs to the KAE1 / TsaD family. It depends on Fe(2+) as a cofactor.

Its subcellular location is the cytoplasm. It carries out the reaction L-threonylcarbamoyladenylate + adenosine(37) in tRNA = N(6)-L-threonylcarbamoyladenosine(37) in tRNA + AMP + H(+). Required for the formation of a threonylcarbamoyl group on adenosine at position 37 (t(6)A37) in tRNAs that read codons beginning with adenine. Is involved in the transfer of the threonylcarbamoyl moiety of threonylcarbamoyl-AMP (TC-AMP) to the N6 group of A37, together with TsaE and TsaB. TsaD likely plays a direct catalytic role in this reaction. The protein is tRNA N6-adenosine threonylcarbamoyltransferase of Shewanella loihica (strain ATCC BAA-1088 / PV-4).